The chain runs to 151 residues: Shadow of prion protein (151 aa).

Residues 1-24 (MNWAPATCWALLLAAAFLCDSGAA) form the signal peptide. Residues 89–113 (WRRAAGPGERGLEDEEDGVPGGNGT) are disordered. N-linked (GlcNAc...) asparagine glycosylation is present at N111. G126 carries GPI-anchor amidated glycine lipidation. The propeptide at 127 to 151 (AGPTRGPRLCLVLGGALGALGLLRP) is removed in mature form.

It belongs to the SPRN family. In terms of processing, N-glycosylated. In terms of tissue distribution, mainly expressed in brain. In brain, it is expressed in hippocampus.

The protein localises to the cell membrane. In terms of biological role, prion-like protein that has PrP(C)-like neuroprotective activity. May act as a modulator for the biological actions of normal and abnormal PrP. The polypeptide is Shadow of prion protein (SPRN) (Homo sapiens (Human)).